Here is a 223-residue protein sequence, read N- to C-terminus: Cytidylate kinase (223 aa).

Residue 17–25 (GPTASGKGT) participates in ATP binding.

It belongs to the cytidylate kinase family. Type 1 subfamily.

The protein resides in the cytoplasm. The catalysed reaction is CMP + ATP = CDP + ADP. It catalyses the reaction dCMP + ATP = dCDP + ADP. This chain is Cytidylate kinase, found in Bordetella pertussis (strain Tohama I / ATCC BAA-589 / NCTC 13251).